The primary structure comprises 316 residues: Beta-ketoacyl-[acyl-carrier-protein] synthase III (316 aa).

Active-site residues include Cys112 and His243. Residues 244–248 are ACP-binding; sequence QANLR. The active site involves Asn273.

This sequence belongs to the thiolase-like superfamily. FabH family. In terms of assembly, homodimer.

The protein localises to the cytoplasm. It catalyses the reaction malonyl-[ACP] + acetyl-CoA + H(+) = 3-oxobutanoyl-[ACP] + CO2 + CoA. It participates in lipid metabolism; fatty acid biosynthesis. Functionally, catalyzes the condensation reaction of fatty acid synthesis by the addition to an acyl acceptor of two carbons from malonyl-ACP. Catalyzes the first condensation reaction which initiates fatty acid synthesis and may therefore play a role in governing the total rate of fatty acid production. Possesses both acetoacetyl-ACP synthase and acetyl transacylase activities. Its substrate specificity determines the biosynthesis of branched-chain and/or straight-chain of fatty acids. This chain is Beta-ketoacyl-[acyl-carrier-protein] synthase III, found in Yersinia pseudotuberculosis serotype O:1b (strain IP 31758).